The primary structure comprises 159 residues: Phosphopantetheine adenylyltransferase (159 aa).

Thr-9 is a substrate binding site. Residues 9–10 (TF) and His-17 each bind ATP. 3 residues coordinate substrate: Lys-41, Leu-73, and Arg-87. Residues 88 to 90 (GLR), Glu-98, and 123 to 129 (YSYISST) each bind ATP.

The protein belongs to the bacterial CoaD family. Homohexamer. It depends on Mg(2+) as a cofactor.

The protein resides in the cytoplasm. It carries out the reaction (R)-4'-phosphopantetheine + ATP + H(+) = 3'-dephospho-CoA + diphosphate. It functions in the pathway cofactor biosynthesis; coenzyme A biosynthesis; CoA from (R)-pantothenate: step 4/5. In terms of biological role, reversibly transfers an adenylyl group from ATP to 4'-phosphopantetheine, yielding dephospho-CoA (dPCoA) and pyrophosphate. In Azotobacter vinelandii (strain DJ / ATCC BAA-1303), this protein is Phosphopantetheine adenylyltransferase.